Here is a 1577-residue protein sequence, read N- to C-terminus: MAP kinase-activating death domain protein (1577 aa).

Residues 13–267 (YLVIVGARHP…VPVSGQKRVD (255 aa)) form the uDENN domain. Basic and acidic residues predominate over residues 106 to 121 (KEKVEGGAGPRGKEGA). Positions 106-166 (KEKVEGGAGP…WGKRRAKAGS (61 aa)) are disordered. A compositionally biased stretch (low complexity) spans 123 to 140 (TSGASEEAATGSSESGST). Residues 141 to 156 (LQPPSADSTPDINQSP) are compositionally biased toward polar residues. Serine 155 carries the post-translational modification Phosphoserine. The region spanning 288–428 (RFTLVDFPLH…ESLELKKHLK (141 aa)) is the cDENN domain. Positions 430–564 (ALASMSLNTQ…LNPSNYAFQR (135 aa)) constitute a dDENN domain. 2 disordered regions span residues 604–635 (LSVP…SSYS) and 676–840 (QPQK…NSTE). Residues 614–629 (SDPTEDSGSDSQDYDD) show a composition bias toward acidic residues. A phosphoserine mark is found at serine 688 and serine 691. Residues 688–698 (SENSQENPPLR) are compositionally biased toward polar residues. A compositionally biased stretch (low complexity) spans 699–715 (SSSSTTASSSPSTVVHS). Polar residues predominate over residues 793–803 (PRFSQHVSGSR). Phosphoserine is present on residues serine 812, serine 817, and serine 819. Residues 826-839 (RASSPNSTVSNNST) are compositionally biased toward low complexity. Phosphoserine is present on residues serine 857, serine 861, serine 915, serine 920, serine 929, and serine 1058. Disordered stretches follow at residues 912-940 (QKSS…SSEN), 1050-1109 (KEPD…DTRS), and 1127-1272 (EVKK…RSSE). The span at 928-938 (SSPQGRSSNSS) shows a compositional bias: low complexity. Residues threonine 1060 and threonine 1065 each carry the phosphothreonine modification. Serine 1109 carries the post-translational modification Phosphoserine. Over residues 1127–1141 (EVKKQKALEKQRPEG) the composition is skewed to basic and acidic residues. The span at 1157 to 1172 (QMSADSGVSLTSASQR) shows a compositional bias: polar residues. Over residues 1189–1203 (SSSQDSEVSTVSNSS) the composition is skewed to low complexity. A compositionally biased stretch (polar residues) spans 1232-1248 (SRATLSDSEIETNSATS). At threonine 1235 the chain carries Phosphothreonine. Phosphoserine occurs at positions 1237 and 1266. Positions 1336–1411 (GMDQGPQEMI…GLVYSQQVNE (76 aa)) constitute a Death domain.

The protein belongs to the MADD family. As to quaternary structure, interacts (via death domain) with TNFRSF1A (via death domain). Interacts with PIDD1. Interacts with YWHAZ. Interacts (via death domain) with KIF1B; links the motor KIF1B to Rab3-carrying vesicles in anterograde synaptic vesicle transport. Interacts with KIF1A. Interacts (via uDENN domain) with RAB3A, RAB3B, RAB3C and RAB3D; the GTP-bound form of the Rab proteins is preferred for interaction. In terms of tissue distribution, expressed in the brain.

The protein localises to the cell membrane. It is found in the cytoplasm. Its subcellular location is the cell projection. It localises to the axon. Its function is as follows. Guanyl-nucleotide exchange factor that regulates small GTPases of the Rab family. Converts GDP-bound inactive form of RAB27A and RAB27B to the GTP-bound active forms. Converts GDP-bound inactive form of RAB3A, RAB3C and RAB3D to the GTP-bound active forms, GTPases involved in synaptic vesicle exocytosis and vesicle secretion. Plays a role in synaptic vesicle formation and in vesicle trafficking at the neuromuscular junction. Involved in up-regulating a post-docking step of synaptic exocytosis in central synapses. Probably by binding to the motor proteins KIF1B and KIF1A, mediates motor-dependent transport of GTP-RAB3A-positive vesicles to the presynaptic nerve terminals. Plays a role in TNFA-mediated activation of the MAPK pathway, including ERK1/2. May link TNFRSF1A with MAP kinase activation. May be involved in the regulation of TNFA-induced apoptosis. The chain is MAP kinase-activating death domain protein from Mus musculus (Mouse).